The sequence spans 433 residues: Xylose isomerase (433 aa).

Residues H99 and D102 contribute to the active site. Positions 230, 266, 269, 294, 305, 307, and 337 each coordinate Mg(2+).

This sequence belongs to the xylose isomerase family. As to quaternary structure, homotetramer. It depends on Mg(2+) as a cofactor.

The protein localises to the cytoplasm. It catalyses the reaction alpha-D-xylose = alpha-D-xylulofuranose. The chain is Xylose isomerase from Cereibacter sphaeroides (strain ATCC 17029 / ATH 2.4.9) (Rhodobacter sphaeroides).